A 199-amino-acid chain; its full sequence is dITP/XTP pyrophosphatase (199 aa).

A substrate-binding site is contributed by 8–13 (TRNKGK). Residues Glu-41 and Asp-70 each coordinate Mg(2+). The Proton acceptor role is filled by Asp-70. Substrate-binding positions include Ser-71, 153–156 (FGYD), Lys-176, and 181–182 (HR).

Belongs to the HAM1 NTPase family. Homodimer. Mg(2+) serves as cofactor.

The enzyme catalyses XTP + H2O = XMP + diphosphate + H(+). It carries out the reaction dITP + H2O = dIMP + diphosphate + H(+). It catalyses the reaction ITP + H2O = IMP + diphosphate + H(+). Functionally, pyrophosphatase that catalyzes the hydrolysis of nucleoside triphosphates to their monophosphate derivatives, with a high preference for the non-canonical purine nucleotides XTP (xanthosine triphosphate), dITP (deoxyinosine triphosphate) and ITP. Seems to function as a house-cleaning enzyme that removes non-canonical purine nucleotides from the nucleotide pool, thus preventing their incorporation into DNA/RNA and avoiding chromosomal lesions. This Geobacter sulfurreducens (strain ATCC 51573 / DSM 12127 / PCA) protein is dITP/XTP pyrophosphatase.